The primary structure comprises 278 residues: Dehydrogenase/reductase SDR family member 4 (278 aa).

Leucine 36–valine 60 lines the NADP(+) pocket. The residue at position 92 (lysine 92) is an N6-acetyllysine; alternate. The residue at position 92 (lysine 92) is an N6-succinyllysine; alternate. Residue lysine 105 is modified to N6-acetyllysine. Position 140 is a phosphoserine (isoleucine 140). Serine 169 contacts substrate. The Proton acceptor role is filled by tyrosine 182. Lysine 186 serves as a coordination point for NADP(+). N6-acetyllysine; alternate is present on lysine 216. Residue lysine 216 is modified to N6-succinyllysine; alternate. Serine 220 bears the Phosphoserine mark. 2 positions are modified to N6-succinyllysine: lysine 227 and lysine 234. The short motif at serine 276–leucine 278 is the Peroxisomal targeting signal element.

Belongs to the short-chain dehydrogenases/reductases (SDR) family. Homotetramer. Predominantly expressed in normal cervix (at protein level). As to expression, expressed in some neoplastic cervical tissues, but not in normal cervix (at protein level). In terms of tissue distribution, expressed in a few neoplastic cervical tissues. High expression in liver.

The protein localises to the peroxisome. Its subcellular location is the nucleus. The enzyme catalyses a secondary alcohol + NADP(+) = a ketone + NADPH + H(+). The catalysed reaction is 3beta-hydroxy-5beta-pregnane-20-one + NADP(+) = 5beta-pregnan-3,20-dione + NADPH + H(+). It carries out the reaction 5beta-dihydrotestosterone + NADPH + H(+) = 5beta-androstane-3beta,17beta-diol + NADP(+). It catalyses the reaction 5beta-androstane-3,17-dione + NADPH + H(+) = 3beta-hydroxy-5beta-androstane-17-one + NADP(+). The enzyme catalyses isatin + NADPH + H(+) = 3-hydroxyindolin-2-one + NADP(+). The catalysed reaction is lithocholate + NADP(+) = 3-oxo-5beta-cholan-24-oate + NADPH + H(+). It carries out the reaction 3-oxo-5beta-cholan-24-oate + NADPH + H(+) = isolithocholate + NADP(+). Inhibited by flavonoids (quercetin and genistein), cetylpyridium chloride, phenylhexane and valproic acid. Low inhibition is observed with fatty acids (myristic acid and lauric acid). No significant inhibition is observed with barbital, dicumarol, indomethacin, metyrapone, ethacrynic acid, disulfiram, hexestrol and benzodiazepines (diazepam and nitrazepam). NADPH-dependent oxidoreductase which catalyzes the reduction of a variety of compounds bearing carbonyl groups including ketosteroids, alpha-dicarbonyl compounds, aldehydes, aromatic ketones and quinones. Reduces 3-ketosteroids and benzil into 3beta-hydroxysteroids and R-benzoin, respectively, in contrast to the stereoselectivity of non-primate DHRS4s which produce 3alpha-hydroxysteroids and S-benzoin. Diplays low activity toward all-trans-retinal and no activity toward 9-cis-retinal as compared to non-primate mammals. In the reverse reaction, catalyze the NAD-dependent oxidation of 3beta-hydroxysteroids and alcohol, but with much lower efficiency. Involved in the metabolism of 3beta-hydroxysteroids, isatin and xenobiotic carbonyl compounds. Functionally, no detected catalytic activity in vitro, possibly due to the lack of catalytic site. In terms of biological role, NADPH-dependent oxidoreductase which catalyzes the reduction of a variety of compounds bearing carbonyl groups including ketosteroids, alpha-dicarbonyl compounds, aldehydes, aromatic ketones and quinones. Involved in the metabolism of 3beta-hydroxysteroids, isatin and xenobiotic carbonyl compounds. Has a higher catalytic activity for xenobiotic alpha-dicarbonyl compounds, sucha as benzil, than isoform 1 and is involved in benzil detoxification. The chain is Dehydrogenase/reductase SDR family member 4 from Homo sapiens (Human).